Consider the following 108-residue polypeptide: Envelope small membrane protein (108 aa).

Residues 1-10 are Virion surface-facing; the sequence is MNLLNKSLEE. Residues 11 to 31 traverse the membrane as a helical segment; it reads NGSFLTALYIIVGFLALYLLG. At 32–108 the chain is on the intravirion side; the sequence is RALQAFVQAA…QDAQRDKLYS (77 aa). Residues 88–108 are disordered; sequence NGWNNKNPANFQDAQRDKLYS. Residues 89–100 are compositionally biased toward polar residues; the sequence is GWNNKNPANFQD.

This sequence belongs to the gammacoronaviruses E protein family. As to quaternary structure, homooligomer. Interacts with the M membrane protein in the budding compartment of the host cell, which is located between endoplasmic reticulum and the Golgi complex. The cytoplasmic tails of both proteins are important for this function. Interacts with Nucleoprotein.

The protein resides in the host Golgi apparatus membrane. Its function is as follows. Plays a central role in virus morphogenesis and assembly. Acts as a viroporin and self-assembles in host membranes forming pentameric protein-lipid pores that allow ion transport. Also plays a role in the induction of apoptosis. The polypeptide is Envelope small membrane protein (Gallus gallus (Chicken)).